The sequence spans 428 residues: Mitochondrial import inner membrane translocase subunit TIM50-C (428 aa).

Residues 59–79 traverse the membrane as a helical segment; that stretch reads LFTCTALPAAAPALFSILHTA. At 80–428 the chain is on the mitochondrial intermembrane side; the sequence is RGYSSTTKQE…KQWSRNILGR (349 aa). Residues 112 to 138 are disordered; sequence FPQTSPEVDSNAEQERKKREEEEEKEN. Basic and acidic residues predominate over residues 124–138; the sequence is EQERKKREEEEEKEN. The 144-residue stretch at 224–367 folds into the FCP1 homology domain; that stretch reads YVQPRYTLVL…LDLIAFLKII (144 aa).

It belongs to the TIM50 family. As to quaternary structure, component of the TIM23 complex at least composed of Tim23, Tim17 (Tim17a1, Tim17a2 or Tim17b1) and a Tim50.

It localises to the mitochondrion inner membrane. In terms of biological role, essential component of the TIM23 complex, a complex that mediates the translocation of transit peptide-containing proteins across the mitochondrial inner membrane. This chain is Mitochondrial import inner membrane translocase subunit TIM50-C (ttm50), found in Drosophila melanogaster (Fruit fly).